Reading from the N-terminus, the 160-residue chain is tRNA (cytidine(56)-2'-O)-methyltransferase (160 aa).

S-adenosyl-L-methionine contacts are provided by residues Leu-68, 94-98 (GAEKV), and 112-119 (IGNQPHSE).

Belongs to the aTrm56 family. As to quaternary structure, homodimer.

Its subcellular location is the cytoplasm. It carries out the reaction cytidine(56) in tRNA + S-adenosyl-L-methionine = 2'-O-methylcytidine(56) in tRNA + S-adenosyl-L-homocysteine + H(+). Specifically catalyzes the AdoMet-dependent 2'-O-ribose methylation of cytidine at position 56 in tRNAs. The protein is tRNA (cytidine(56)-2'-O)-methyltransferase of Saccharolobus solfataricus (strain ATCC 35092 / DSM 1617 / JCM 11322 / P2) (Sulfolobus solfataricus).